A 248-amino-acid chain; its full sequence is ATP synthase subunit a, chloroplastic (248 aa).

Transmembrane regions (helical) follow at residues 39 to 59 (QVLI…ILAV), 96 to 116 (VPFI…GALF), 135 to 155 (INTT…AGLT), 200 to 220 (LVVV…VMFL), and 221 to 241 (GLFT…AYIG).

It belongs to the ATPase A chain family. As to quaternary structure, F-type ATPases have 2 components, CF(1) - the catalytic core - and CF(0) - the membrane proton channel. CF(1) has five subunits: alpha(3), beta(3), gamma(1), delta(1), epsilon(1). CF(0) has four main subunits: a, b, b' and c.

The protein resides in the plastid. It is found in the chloroplast thylakoid membrane. Functionally, key component of the proton channel; it plays a direct role in the translocation of protons across the membrane. In Pelargonium hortorum (Common geranium), this protein is ATP synthase subunit a, chloroplastic.